The following is a 95-amino-acid chain: Protein TusB (95 aa).

It belongs to the DsrH/TusB family. In terms of assembly, heterohexamer, formed by a dimer of trimers. The hexameric TusBCD complex contains 2 copies each of TusB, TusC and TusD. The TusBCD complex interacts with TusE.

Its subcellular location is the cytoplasm. Part of a sulfur-relay system required for 2-thiolation of 5-methylaminomethyl-2-thiouridine (mnm(5)s(2)U) at tRNA wobble positions. The sequence is that of Protein TusB from Yersinia enterocolitica serotype O:8 / biotype 1B (strain NCTC 13174 / 8081).